Reading from the N-terminus, the 431-residue chain is RbAp48-related WD40 repeat-containing protein prw1 (431 aa).

WD repeat units lie at residues 127 to 159 (SHPE…LVFD), 182 to 213 (KHTQ…SCWD), 232 to 263 (SHEK…HVHD), 279 to 310 (AHSG…ALWD), 323 to 354 (GHED…LVWD), and 380 to 411 (GHTS…QIWT).

The protein belongs to the WD repeat HIR1 family. As to quaternary structure, heterotetramer of alp13, clr6, prw1 and pst2.

It localises to the nucleus. Its function is as follows. Has a role in chromatin assembly and chromosome segregation. Involved in the deacetylation of histones. The protein is RbAp48-related WD40 repeat-containing protein prw1 (prw1) of Schizosaccharomyces pombe (strain 972 / ATCC 24843) (Fission yeast).